The following is an 850-amino-acid chain: Receptor-like protein kinase ANXUR1 (850 aa).

Positions 1–26 are cleaved as a signal peptide; sequence MSGKTRILFFLTCLSFLLVFPTRSNG. Residues 27-429 lie on the Extracellular side of the membrane; it reads QDLALSCGTS…KKEFKNEKRH (403 aa). 5 N-linked (GlcNAc...) asparagine glycosylation sites follow: Asn-114, Asn-132, Asn-292, Asn-302, and Asn-330. Residues 430–450 form a helical membrane-spanning segment; sequence AFIIGSAGGVLAVLIGALCFT. Topologically, residues 451 to 850 are cytoplasmic; the sequence is AYKKKQGYQG…FSQIVNPKGR (400 aa). A Protein kinase domain is found at 517-790; that stretch reads FDDSNVIGVG…GDVLWNLEFA (274 aa). ATP is bound by residues 523–531 and Lys-545; that span reads IGVGGFGKV. Asp-641 acts as the Proton acceptor in catalysis. The segment at 796-850 is disordered; that stretch reads TADGTRHRTPNNGGSSEDLGRGGMAVNVAGRDDVSDLSSEDNTEIFSQIVNPKGR. Over residues 839–850 the composition is skewed to polar residues; sequence EIFSQIVNPKGR.

This sequence belongs to the protein kinase superfamily. Ser/Thr protein kinase family. In terms of tissue distribution, expressed in pollen, but not in pistils or seedlings.

It is found in the cell membrane. The enzyme catalyses L-seryl-[protein] + ATP = O-phospho-L-seryl-[protein] + ADP + H(+). It catalyses the reaction L-threonyl-[protein] + ATP = O-phospho-L-threonyl-[protein] + ADP + H(+). Receptor-like protein kinase that controls pollen tube behavior by directing rupture at proper timing to release the sperm cell. This chain is Receptor-like protein kinase ANXUR1 (ANX1), found in Arabidopsis thaliana (Mouse-ear cress).